Here is a 361-residue protein sequence, read N- to C-terminus: Mitogen-activated protein kinase 14A (361 aa).

Residues Y25–F309 form the Protein kinase domain. ATP-binding positions include V31 to V39 and K54. D151 functions as the Proton acceptor in the catalytic mechanism. T181 bears the Phosphothreonine; by MAP2K6 mark. A TXY motif is present at residues T181 to Y183. Y183 is modified (phosphotyrosine; by MAP2K6).

Belongs to the protein kinase superfamily. CMGC Ser/Thr protein kinase family. MAP kinase subfamily. Mg(2+) is required as a cofactor. In terms of processing, dually phosphorylated on Thr-181 and Tyr-183, which activates the enzyme. In terms of tissue distribution, exclusively expressed in the ovary.

The protein resides in the cytoplasm. The protein localises to the nucleus. The catalysed reaction is L-seryl-[protein] + ATP = O-phospho-L-seryl-[protein] + ADP + H(+). It catalyses the reaction L-threonyl-[protein] + ATP = O-phospho-L-threonyl-[protein] + ADP + H(+). With respect to regulation, activated by threonine and tyrosine phosphorylation by the dual specificity kinase, MKK6. Functionally, serine/threonine kinase which acts as an essential component of the MAP kinase signal transduction pathway. Mapk14a is one of the four p38 MAPKs which play an important role in the cascades of cellular responses evoked by extracellular stimuli such as pro-inflammatory cytokines or physical stress leading to direct activation of transcription factors. Accordingly, p38 MAPKs phosphorylate a broad range of proteins and it has been estimated that they may have approximately 200 to 300 substrates each. Some of the targets are downstream kinases which are activated through phosphorylation and further phosphorylate additional targets. The sequence is that of Mitogen-activated protein kinase 14A (mapk14a) from Cyprinus carpio (Common carp).